The chain runs to 381 residues: MRSKKLWISLLFALTLIFTMAFSNMSAQAAGKSSTEKKYIVGFKQTMSAMSSAKKKDVISEKGGKVQKQFKYVNAAAATLDEKAVKELKKDPSVAYVEEDHIAHEYAQSVPYGISQIKAPALHSQGYTGSNVKVAVIDSGIDSSHPDLNVRGGASFVPSETNPYQDGSSHGTHVAGTIAALNNSIGVLGVAPSASLYAVKVLDSTGSGQYSWIINGIEWAISNNMDVINMSLGGPTGSTALKTVVDKAVSSGIVVAAAAGNEGSSGSTSTVGYPAKYPSTIAVGAVNSSNQRASFSSVGSELDVMAPGVSIQSTLPGGTYGAYNGTSMATPHVAGAAALILSKHPTWTNAQVRDRLESTATYLGNSFYYGKGLINVQAAAQ.

The first 29 residues, 1–29, serve as a signal peptide directing secretion; that stretch reads MRSKKLWISLLFALTLIFTMAFSNMSAQA. Positions 30–106 are excised as a propeptide; that stretch reads AGKSSTEKKY…VEEDHIAHEY (77 aa). Residues 38-103 enclose the Inhibitor I9 domain; the sequence is KYIVGFKQTM…VAYVEEDHIA (66 aa). Residues 111-380 form the Peptidase S8 domain; the sequence is PYGISQIKAP…KGLINVQAAA (270 aa). Residue Asp-138 is the Charge relay system of the active site. Asp-147 provides a ligand contact to Ca(2+). Residue His-170 is the Charge relay system of the active site. 8 residues coordinate Ca(2+): Leu-181, Asn-183, Ile-185, Val-187, Ala-275, Tyr-277, Thr-280, and Asp-303. Ser-327 serves as the catalytic Charge relay system.

The protein belongs to the peptidase S8 family. Monomer. Ca(2+) is required as a cofactor.

The protein localises to the secreted. It carries out the reaction Hydrolysis of proteins with broad specificity for peptide bonds, and a preference for a large uncharged residue in P1. Hydrolyzes peptide amides.. Inhibited by PMSF (phenylmethylsulfonyl fluoride). Subtilisin is an extracellular alkaline serine protease, it catalyzes the hydrolysis of proteins and peptide amides. Subtilisin NAT also has fibrinolytic activity. The sequence is that of Subtilisin NAT from Bacillus subtilis subsp. natto.